A 67-amino-acid polypeptide reads, in one-letter code: Protein SlyX homolog (67 aa).

Positions 48–60 (TSAPSTAAESNPQ) are enriched in polar residues. Positions 48–67 (TSAPSTAAESNPQHEIPPHY) are disordered.

This sequence belongs to the SlyX family.

The chain is Protein SlyX homolog from Cupriavidus pinatubonensis (strain JMP 134 / LMG 1197) (Cupriavidus necator (strain JMP 134)).